The sequence spans 510 residues: Leucine-rich repeat protein lrrA (510 aa).

LRR repeat units follow at residues 14 to 34 (YRKR…PPTI), 35 to 59 (GALQ…IGKL), 60 to 82 (SKVE…IGSL), 84 to 106 (TLKQ…NIGA), 107 to 130 (LKNL…ISNC), 132 to 152 (ALEY…EFGK), 153 to 176 (LYNL…ISGW), 177 to 200 (VKLE…CLLG), 202 to 222 (LSTL…LSSM), 224 to 245 (SLTN…LSNL), 246 to 270 (RQLK…LLSE), 272 to 292 (IELD…IATL), 293 to 315 (INLQ…VGNL), 316 to 340 (INLQ…IGKL), 341 to 363 (VNLK…IASM), 365 to 386 (ALKE…IGEL), 387 to 408 (SGLT…SFGN), 410 to 432 (SELQ…LDGL), 433 to 458 (KSCT…LIGL), and 460 to 478 (ILDV…IVMK).

The protein localises to the cytoplasm. Its function is as follows. Involved in cytoskeleton remodeling, which is needed for normal chemotactic aggregation and efficient cell sorting during multicellular morphogenesis. The polypeptide is Leucine-rich repeat protein lrrA (lrrA) (Dictyostelium discoideum (Social amoeba)).